Here is a 496-residue protein sequence, read N- to C-terminus: Probable cytosol aminopeptidase (496 aa).

Mn(2+) contacts are provided by Lys-262 and Asp-267. Lys-274 is an active-site residue. Positions 285, 344, and 346 each coordinate Mn(2+). Arg-348 is a catalytic residue.

The protein belongs to the peptidase M17 family. It depends on Mn(2+) as a cofactor.

It localises to the cytoplasm. It catalyses the reaction Release of an N-terminal amino acid, Xaa-|-Yaa-, in which Xaa is preferably Leu, but may be other amino acids including Pro although not Arg or Lys, and Yaa may be Pro. Amino acid amides and methyl esters are also readily hydrolyzed, but rates on arylamides are exceedingly low.. It carries out the reaction Release of an N-terminal amino acid, preferentially leucine, but not glutamic or aspartic acids.. In terms of biological role, presumably involved in the processing and regular turnover of intracellular proteins. Catalyzes the removal of unsubstituted N-terminal amino acids from various peptides. The polypeptide is Probable cytosol aminopeptidase (Rhizobium johnstonii (strain DSM 114642 / LMG 32736 / 3841) (Rhizobium leguminosarum bv. viciae)).